The primary structure comprises 450 residues: Gluconate permease (450 aa).

12 helical membrane passes run 6–26, 30–50, 60–80, 116–136, 142–162, 183–203, 233–253, 269–289, 312–332, 338–358, 366–386, and 430–450; these read HDAY…VLIT, VHPF…SGMP, DGFG…TMLG, VGIP…VFIV, VSLI…HGLV, ILYG…LFGA, FGVT…KTFA, MIGH…YTFG, AIVM…ASGV, HLAV…AAVI, TVAT…IPGV, and AMET…SLVL.

Belongs to the GntP permease family.

Its subcellular location is the cell inner membrane. It functions in the pathway carbohydrate acid metabolism; D-gluconate degradation. The chain is Gluconate permease (gnuT) from Pseudomonas aeruginosa (strain ATCC 15692 / DSM 22644 / CIP 104116 / JCM 14847 / LMG 12228 / 1C / PRS 101 / PAO1).